Reading from the N-terminus, the 202-residue chain is Small ribosomal subunit protein uS4 (202 aa).

Residues 93–156 (RRLDNMVYRL…KDLKIISEAV (64 aa)) form the S4 RNA-binding domain.

Belongs to the universal ribosomal protein uS4 family. Part of the 30S ribosomal subunit. Contacts protein S5. The interaction surface between S4 and S5 is involved in control of translational fidelity.

In terms of biological role, one of the primary rRNA binding proteins, it binds directly to 16S rRNA where it nucleates assembly of the body of the 30S subunit. With S5 and S12 plays an important role in translational accuracy. The protein is Small ribosomal subunit protein uS4 of Pediococcus pentosaceus (strain ATCC 25745 / CCUG 21536 / LMG 10740 / 183-1w).